The following is a 65-amino-acid chain: Large ribosomal subunit protein bL35 (65 aa).

The segment at 1 to 29 is disordered; the sequence is MPKMKTHSGAKKRFKLTGSGKVKRQQANR.

Belongs to the bacterial ribosomal protein bL35 family.

The protein is Large ribosomal subunit protein bL35 of Kocuria rhizophila (strain ATCC 9341 / DSM 348 / NBRC 103217 / DC2201).